A 459-amino-acid polypeptide reads, in one-letter code: Glutamyl-tRNA reductase (459 aa).

Substrate contacts are provided by residues 49–52 (TCNR), S109, 114–116 (EQQ), and Q120. Catalysis depends on C50, which acts as the Nucleophile. 189–194 (GAGAMG) lines the NADP(+) pocket.

The protein belongs to the glutamyl-tRNA reductase family. In terms of assembly, homodimer.

It catalyses the reaction (S)-4-amino-5-oxopentanoate + tRNA(Glu) + NADP(+) = L-glutamyl-tRNA(Glu) + NADPH + H(+). It participates in porphyrin-containing compound metabolism; protoporphyrin-IX biosynthesis; 5-aminolevulinate from L-glutamyl-tRNA(Glu): step 1/2. Catalyzes the NADPH-dependent reduction of glutamyl-tRNA(Glu) to glutamate 1-semialdehyde (GSA). This Mycolicibacterium paratuberculosis (strain ATCC BAA-968 / K-10) (Mycobacterium paratuberculosis) protein is Glutamyl-tRNA reductase.